A 153-amino-acid chain; its full sequence is 6,7-dimethyl-8-ribityllumazine synthase (153 aa).

Residues Phe21, 55-57 (AFE), and 79-81 (CVI) each bind 5-amino-6-(D-ribitylamino)uracil. 84–85 (AT) is a (2S)-2-hydroxy-3-oxobutyl phosphate binding site. The Proton donor role is filled by His87. Phe112 is a 5-amino-6-(D-ribitylamino)uracil binding site. Arg126 is a binding site for (2S)-2-hydroxy-3-oxobutyl phosphate.

The protein belongs to the DMRL synthase family. As to quaternary structure, forms an icosahedral capsid composed of 60 subunits, arranged as a dodecamer of pentamers.

The enzyme catalyses (2S)-2-hydroxy-3-oxobutyl phosphate + 5-amino-6-(D-ribitylamino)uracil = 6,7-dimethyl-8-(1-D-ribityl)lumazine + phosphate + 2 H2O + H(+). It participates in cofactor biosynthesis; riboflavin biosynthesis; riboflavin from 2-hydroxy-3-oxobutyl phosphate and 5-amino-6-(D-ribitylamino)uracil: step 1/2. Its function is as follows. Catalyzes the formation of 6,7-dimethyl-8-ribityllumazine by condensation of 5-amino-6-(D-ribitylamino)uracil with 3,4-dihydroxy-2-butanone 4-phosphate. This is the penultimate step in the biosynthesis of riboflavin. This is 6,7-dimethyl-8-ribityllumazine synthase from Staphylococcus epidermidis (strain ATCC 35984 / DSM 28319 / BCRC 17069 / CCUG 31568 / BM 3577 / RP62A).